A 335-amino-acid chain; its full sequence is Mycobacterial beta-ketoacyl-[acyl-carrier-protein] synthase III (335 aa).

Catalysis depends on residues Cys122 and His258. The tract at residues 259–263 is ACP-binding; the sequence is QANSR. Residue Asn289 is part of the active site.

Belongs to the thiolase-like superfamily. FabH family. Homodimer.

It localises to the cytoplasm. The catalysed reaction is malonyl-[ACP] + dodecanoyl-CoA + H(+) = 3-oxotetradecanoyl-[ACP] + CO2 + CoA. Its pathway is lipid metabolism; fatty acid biosynthesis. It functions in the pathway lipid metabolism; mycolic acid biosynthesis. In terms of biological role, catalyzes the condensation reaction of fatty acid synthesis by the addition to an acyl acceptor of two carbons from malonyl-ACP. Catalyzes the first condensation reaction which initiates fatty acid synthesis and may therefore play a role in governing the total rate of fatty acid production. Possesses both acetoacetyl-ACP synthase and acetyl transacylase activities. Its substrate specificity determines the biosynthesis of branched-chain and/or straight-chain of fatty acids. This is Mycobacterial beta-ketoacyl-[acyl-carrier-protein] synthase III from Mycobacterium avium (strain 104).